Reading from the N-terminus, the 134-residue chain is Peroxisomal testis-specific protein 1 (134 aa).

Residues 131–134 (NHLL) carry the Microbody targeting signal motif.

It localises to the peroxisome. The chain is Peroxisomal testis-specific protein 1 (PXT1) from Homo sapiens (Human).